A 1106-amino-acid polypeptide reads, in one-letter code: Communication mutant protein F (1106 aa).

A signal peptide spans 1 to 28 (MKIYKKNHFLKILIIFIYLSCNILKVNA). Residues 254-380 (TIWPNGVVPS…YHNTWSKLAS (127 aa)) form the G8 domain. N-linked (GlcNAc...) asparagine glycans are attached at residues asparagine 267, asparagine 306, asparagine 512, asparagine 536, asparagine 677, asparagine 715, and asparagine 833.

Belongs to the comF family.

It localises to the secreted. The sequence is that of Communication mutant protein F (comF-1) from Dictyostelium discoideum (Social amoeba).